The following is a 112-amino-acid chain: Large ribosomal subunit protein uL22 (112 aa).

Belongs to the universal ribosomal protein uL22 family. As to quaternary structure, part of the 50S ribosomal subunit.

In terms of biological role, this protein binds specifically to 23S rRNA; its binding is stimulated by other ribosomal proteins, e.g. L4, L17, and L20. It is important during the early stages of 50S assembly. It makes multiple contacts with different domains of the 23S rRNA in the assembled 50S subunit and ribosome. The globular domain of the protein is located near the polypeptide exit tunnel on the outside of the subunit, while an extended beta-hairpin is found that lines the wall of the exit tunnel in the center of the 70S ribosome. The sequence is that of Large ribosomal subunit protein uL22 from Legionella pneumophila subsp. pneumophila (strain Philadelphia 1 / ATCC 33152 / DSM 7513).